We begin with the raw amino-acid sequence, 153 residues long: Ubiquitin-conjugating enzyme E2 13 (153 aa).

The 147-residue stretch at 3-149 (SLPKRIIKET…AREWTKLYAK (147 aa)) folds into the UBC core domain. The Glycyl thioester intermediate role is filled by Cys87. Lys92 participates in a covalent cross-link: Glycyl lysine isopeptide (Lys-Gly) (interchain with G-Cter in ubiquitin).

Belongs to the ubiquitin-conjugating enzyme family. In terms of assembly, heterodimer with MMS2.

It carries out the reaction S-ubiquitinyl-[E1 ubiquitin-activating enzyme]-L-cysteine + [E2 ubiquitin-conjugating enzyme]-L-cysteine = [E1 ubiquitin-activating enzyme]-L-cysteine + S-ubiquitinyl-[E2 ubiquitin-conjugating enzyme]-L-cysteine.. It participates in protein modification; protein ubiquitination. Its function is as follows. Has a role in the DNA error-free postreplication repair (PRR) pathway. The UBC13/MMS2 heterodimer catalyzes the synthesis of non-canonical poly-ubiquitin chains that are linked through 'Lys-63'. The polypeptide is Ubiquitin-conjugating enzyme E2 13 (UBC13) (Saccharomyces cerevisiae (strain ATCC 204508 / S288c) (Baker's yeast)).